Here is a 617-residue protein sequence, read N- to C-terminus: Proline--tRNA ligase (617 aa).

The protein belongs to the class-II aminoacyl-tRNA synthetase family. ProS type 1 subfamily. As to quaternary structure, homodimer.

Its subcellular location is the cytoplasm. The catalysed reaction is tRNA(Pro) + L-proline + ATP = L-prolyl-tRNA(Pro) + AMP + diphosphate. Catalyzes the attachment of proline to tRNA(Pro) in a two-step reaction: proline is first activated by ATP to form Pro-AMP and then transferred to the acceptor end of tRNA(Pro). As ProRS can inadvertently accommodate and process non-cognate amino acids such as alanine and cysteine, to avoid such errors it has two additional distinct editing activities against alanine. One activity is designated as 'pretransfer' editing and involves the tRNA(Pro)-independent hydrolysis of activated Ala-AMP. The other activity is designated 'posttransfer' editing and involves deacylation of mischarged Ala-tRNA(Pro). The misacylated Cys-tRNA(Pro) is not edited by ProRS. This is Proline--tRNA ligase from Streptococcus pneumoniae (strain ATCC BAA-255 / R6).